Here is a 161-residue protein sequence, read N- to C-terminus: Phosphopantetheine adenylyltransferase (161 aa).

Position 11 (Ser11) interacts with substrate. ATP is bound by residues 11–12 (SF) and His19. Positions 43, 75, and 89 each coordinate substrate. ATP is bound by residues 90-92 (GLR), Glu100, and 125-131 (YSYLSSS).

This sequence belongs to the bacterial CoaD family. As to quaternary structure, homohexamer. Requires Mg(2+) as cofactor.

The protein resides in the cytoplasm. The enzyme catalyses (R)-4'-phosphopantetheine + ATP + H(+) = 3'-dephospho-CoA + diphosphate. It participates in cofactor biosynthesis; coenzyme A biosynthesis; CoA from (R)-pantothenate: step 4/5. Functionally, reversibly transfers an adenylyl group from ATP to 4'-phosphopantetheine, yielding dephospho-CoA (dPCoA) and pyrophosphate. The polypeptide is Phosphopantetheine adenylyltransferase (Citrifermentans bemidjiense (strain ATCC BAA-1014 / DSM 16622 / JCM 12645 / Bem) (Geobacter bemidjiensis)).